The primary structure comprises 1338 residues: ABC-type transporter kk1G (1338 aa).

The disordered stretch occupies residues 1 to 21 (MSAIELPPLRSRSEEAARAEH). A compositionally biased stretch (basic and acidic residues) spans 11 to 21 (SRSEEAARAEH). Transmembrane regions (helical) follow at residues 75–95 (YFLI…MPLM), 130–150 (LYIF…MLAI), 203–223 (HFAT…VALV), 230–250 (LIAS…FPPF), 312–332 (TMSP…WFGI), and 340–360 (ISSV…VMNI). In terms of domain architecture, ABC transmembrane type-1 1 spans 80-372 (LCCFTSIGAG…VASPIISIAK (293 aa)). The ABC transporter 1 domain maps to 405–706 (ITFINVAFSY…GDGVYYGLVH (302 aa)). 440–447 (GPSGSGKS) lines the ATP pocket. Disordered regions lie at residues 473-518 (EIPS…TCTG) and 715-747 (EDDD…HASR). 6 consecutive transmembrane segments (helical) span residues 777-797 (VCCI…YIFA), 816-836 (FWAG…YLLG), 895-917 (MSMA…VYGW), 919-941 (LSLV…RTRL), 1003-1023 (IIFA…FWYG), and 1037-1057 (FFIV…WFSF). Positions 777-1063 (VCCIGILGAG…WFSFTPSMAQ (287 aa)) constitute an ABC transmembrane type-1 2 domain. Residues 1096-1333 (IEFQHVSFKY…KGVYWQMCQA (238 aa)) form the ABC transporter 2 domain. Residue 1130-1137 (GSSGCGKS) coordinates ATP.

Belongs to the ABC transporter superfamily. ABCB family. Multidrug resistance exporter (TC 3.A.1.201) subfamily.

It localises to the cell membrane. It participates in secondary metabolite biosynthesis. Its function is as follows. ABC transporter; part of the gene cluster that mediates the biosynthesis of KK-1, a novel cyclic depsipeptide with 10 residues which is a promising active compound with high activity against many plant pathogens, especially Botrytis cinerea. Is probably directly involved in the secretion of KK-1 and thus confers self-tolerance against KK-1. In Curvularia clavata, this protein is ABC-type transporter kk1G.